A 469-amino-acid chain; its full sequence is Neuraminidase (469 aa).

Over 1 to 6 (MNPNQK) the chain is Intravirion. The chain crosses the membrane as a helical span at residues 7–27 (IITIGSICMVVGIISLILQIG). The involved in apical transport and lipid raft association stretch occupies residues 11-33 (GSICMVVGIISLILQIGNIVSIW). Residues 28–469 (NIVSIWISHS…GAELPFTIDK (442 aa)) are Virion surface-facing. The interval 36 to 90 (HSIQTGNQNHTGTCNQSIITYKNSTWVNQTYVNISNTNVVAGKDTTSVILAGNSS) is hypervariable stalk region. N-linked (GlcNAc...) asparagine; by host glycosylation is found at Asn44, Asn50, Asn58, Asn63, Asn68, and Asn88. The interval 91–469 (LCPIRGWAIY…GAELPFTIDK (379 aa)) is head of neuraminidase. Cystine bridges form between Cys92–Cys417, Cys124–Cys129, Cys184–Cys231, Cys233–Cys238, Cys279–Cys292, Cys281–Cys290, Cys318–Cys335, and Cys421–Cys446. Arg118 provides a ligand contact to substrate. N-linked (GlcNAc...) asparagine; by host glycosylation occurs at Asn146. Asp151 serves as the catalytic Proton donor/acceptor. Arg152 lines the substrate pocket. N-linked (GlcNAc...) asparagine; by host glycosylation is present at Asn235. Residue 277–278 (EE) participates in substrate binding. Substrate is bound at residue Arg293. Ca(2+)-binding residues include Asp294, Gly298, Asp324, and Asn344. Asn365 carries an N-linked (GlcNAc...) asparagine; by host glycan. Arg368 contacts substrate. Tyr402 serves as the catalytic Nucleophile.

Belongs to the glycosyl hydrolase 34 family. In terms of assembly, homotetramer. Requires Ca(2+) as cofactor. Post-translationally, N-glycosylated.

Its subcellular location is the virion membrane. The protein localises to the host apical cell membrane. It carries out the reaction Hydrolysis of alpha-(2-&gt;3)-, alpha-(2-&gt;6)-, alpha-(2-&gt;8)- glycosidic linkages of terminal sialic acid residues in oligosaccharides, glycoproteins, glycolipids, colominic acid and synthetic substrates.. Its activity is regulated as follows. Inhibited by the neuraminidase inhibitors zanamivir (Relenza) and oseltamivir (Tamiflu). These drugs interfere with the release of progeny virus from infected cells and are effective against all influenza strains. Resistance to neuraminidase inhibitors is quite rare. Catalyzes the removal of terminal sialic acid residues from viral and cellular glycoconjugates. Cleaves off the terminal sialic acids on the glycosylated HA during virus budding to facilitate virus release. Additionally helps virus spread through the circulation by further removing sialic acids from the cell surface. These cleavages prevent self-aggregation and ensure the efficient spread of the progeny virus from cell to cell. Otherwise, infection would be limited to one round of replication. Described as a receptor-destroying enzyme because it cleaves a terminal sialic acid from the cellular receptors. May facilitate viral invasion of the upper airways by cleaving the sialic acid moieties on the mucin of the airway epithelial cells. Likely to plays a role in the budding process through its association with lipid rafts during intracellular transport. May additionally display a raft-association independent effect on budding. Plays a role in the determination of host range restriction on replication and virulence. Sialidase activity in late endosome/lysosome traffic seems to enhance virus replication. The protein is Neuraminidase of Aves (Human).